Reading from the N-terminus, the 284-residue chain is HTH-type transcriptional activator RhaR (284 aa).

Residues 181–279 enclose the HTH araC/xylS-type domain; the sequence is DMLMNALRAS…GVSPSAYRQR (99 aa). DNA-binding regions (H-T-H motif) lie at residues 198–219 and 246–269; these read EAFC…KEQT and IGDI…HQAF.

Binds DNA as a dimer.

The protein localises to the cytoplasm. In terms of biological role, activates expression of the rhaSR operon in response to L-rhamnose. This is HTH-type transcriptional activator RhaR from Pectobacterium carotovorum subsp. carotovorum (strain PC1).